The chain runs to 108 residues: Class I hydrophobin 3 (108 aa).

Residues 1 to 17 form the signal peptide; sequence MFFQTTIVAALAFLAVA. 4 disulfides stabilise this stretch: cysteine 28–cysteine 87, cysteine 35–cysteine 81, cysteine 36–cysteine 69, and cysteine 88–cysteine 101. Residue asparagine 37 is glycosylated (N-linked (GlcNAc...) asparagine).

The protein belongs to the fungal hydrophobin family. Self-assembles to form functional amyloid fibrils called rodlets. Self-assembly into fibrillar rodlets occurs spontaneously at hydrophobic:hydrophilic interfaces and the rodlets further associate laterally to form amphipathic monolayers.

Its subcellular location is the secreted. The protein localises to the cell wall. Functionally, aerial growth, conidiation, and dispersal of filamentous fungi in the environment rely upon a capability of their secreting small amphipathic proteins called hydrophobins (HPBs) with low sequence identity. Class I can self-assemble into an outermost layer of rodlet bundles on aerial cell surfaces, conferring cellular hydrophobicity that supports fungal growth, development and dispersal; whereas Class II form highly ordered films at water-air interfaces through intermolecular interactions but contribute nothing to the rodlet structure. Vmh3 is a class I hydrophobin that is essential for the maintenance of the surface hydrophobicity of the mycelium and might be involved in the development of fruiting bodies. Plays an important role in hyphal resistance against environmental stress. Necessary for the efficient biodegradation of lignin. The protein is Class I hydrophobin 3 of Pleurotus ostreatus (Oyster mushroom).